A 598-amino-acid chain; its full sequence is Elongation factor 4 (598 aa).

In terms of domain architecture, tr-type G spans 4-186 (KHIRNFSIIA…VIVRQIPPPE (183 aa)). Residues 16–21 (DHGKST) and 133–136 (NKID) contribute to the GTP site.

Belongs to the TRAFAC class translation factor GTPase superfamily. Classic translation factor GTPase family. LepA subfamily.

The protein resides in the cell inner membrane. It catalyses the reaction GTP + H2O = GDP + phosphate + H(+). Required for accurate and efficient protein synthesis under certain stress conditions. May act as a fidelity factor of the translation reaction, by catalyzing a one-codon backward translocation of tRNAs on improperly translocated ribosomes. Back-translocation proceeds from a post-translocation (POST) complex to a pre-translocation (PRE) complex, thus giving elongation factor G a second chance to translocate the tRNAs correctly. Binds to ribosomes in a GTP-dependent manner. This Pseudoalteromonas atlantica (strain T6c / ATCC BAA-1087) protein is Elongation factor 4.